Here is a 348-residue protein sequence, read N- to C-terminus: F(420)H(2) dehydrogenase subunit H (348 aa).

Helical transmembrane passes span 20–40, 93–113, 127–147, 172–192, 198–218, 259–279, 286–306, and 328–348; these read GVVG…AVWL, IFMM…AVFI, ISVL…FMIA, PLGI…IVEI, LLWN…ALMA, ILGS…PAFV, GLIA…MTII, and LLPL…YLGA.

Belongs to the complex I subunit 1 family. As to quaternary structure, the FPO complex is composed of at least 13 different subunits. FpoA, FpoH, FpoJ, FpoK, FpoL, FpoM and FpoN proteins constitute the membrane sector of the complex.

It is found in the cell membrane. The enzyme catalyses methanophenazine + reduced coenzyme F420-(gamma-L-Glu)(n) = dihydromethanophenazine + oxidized coenzyme F420-(gamma-L-Glu)(n) + H(+). Functionally, component of the F(420)H(2) dehydrogenase (FPO complex) which is part of the energy-conserving F(420)H(2):heterodisulfide oxidoreductase system. The membrane-bound electron transfer system of the complex plays an important role in the metabolism of methylotrophic methanogens when the organisms grow on methanol or methylamines. Catalyzes the oxidation of methanophenazine to dihydromethanophenazine. It shuttles electrons from F(420)H(2), via FAD and iron-sulfur (Fe-S) centers, to methanophenazine (an electron carrier in the membrane). It couples the redox reaction to proton translocation (for every two electrons transferred, two hydrogen ions are translocated across the cytoplasmic membrane), and thus conserves the redox energy in a proton gradient. In Methanosarcina acetivorans (strain ATCC 35395 / DSM 2834 / JCM 12185 / C2A), this protein is F(420)H(2) dehydrogenase subunit H.